A 120-amino-acid chain; its full sequence is Peptidyl-tRNA hydrolase (120 aa).

This sequence belongs to the PTH2 family.

It is found in the cytoplasm. It catalyses the reaction an N-acyl-L-alpha-aminoacyl-tRNA + H2O = an N-acyl-L-amino acid + a tRNA + H(+). In terms of biological role, the natural substrate for this enzyme may be peptidyl-tRNAs which drop off the ribosome during protein synthesis. The polypeptide is Peptidyl-tRNA hydrolase (Saccharolobus islandicus (strain Y.N.15.51 / Yellowstone #2) (Sulfolobus islandicus)).